We begin with the raw amino-acid sequence, 408 residues long: Innexin-12 (408 aa).

The helical transmembrane segment at 29–49 (TIGLVLASAFITGWSFVGSPI) threads the bilayer. Asparagine 99 is a glycosylation site (N-linked (GlcNAc...) asparagine). Helical transmembrane passes span 113 to 133 (QWVPFILALQAMLFYFPVVIW), 197 to 217 (VITSYLFMKALFLINVLFQFV), and 284 to 304 (IFVALWWWLCFLTVVTITNTI).

It belongs to the pannexin family.

It localises to the cell membrane. The protein resides in the cell junction. Its subcellular location is the gap junction. In terms of biological role, structural component of the gap junctions. Plays a role in oocyte directional transit in the spermatheca during ovulation by facilitating the directional propagation of the calcium signal in the spermatheca. Plays a role in male tail tip morphogenesis. This Caenorhabditis elegans protein is Innexin-12.